Here is a 1201-residue protein sequence, read N- to C-terminus: DNA-directed RNA polymerase subunit beta (1201 aa).

Residues 1165-1201 (DALSKFKQQQDEKAADKAAKADAAKPSETTNAQQDNQ) are disordered. The span at 1172–1189 (QQQDEKAADKAAKADAAK) shows a compositional bias: basic and acidic residues. Residues 1191 to 1201 (SETTNAQQDNQ) show a composition bias toward polar residues.

The protein belongs to the RNA polymerase beta chain family. The RNAP catalytic core consists of 2 alpha, 1 beta, 1 beta' and 1 omega subunit. When a sigma factor is associated with the core the holoenzyme is formed, which can initiate transcription.

The enzyme catalyses RNA(n) + a ribonucleoside 5'-triphosphate = RNA(n+1) + diphosphate. Functionally, DNA-dependent RNA polymerase catalyzes the transcription of DNA into RNA using the four ribonucleoside triphosphates as substrates. This chain is DNA-directed RNA polymerase subunit beta, found in Lactiplantibacillus plantarum (strain ATCC BAA-793 / NCIMB 8826 / WCFS1) (Lactobacillus plantarum).